Consider the following 201-residue polypeptide: 3-isopropylmalate dehydratase small subunit (201 aa).

Belongs to the LeuD family. LeuD type 1 subfamily. In terms of assembly, heterodimer of LeuC and LeuD.

It carries out the reaction (2R,3S)-3-isopropylmalate = (2S)-2-isopropylmalate. The protein operates within amino-acid biosynthesis; L-leucine biosynthesis; L-leucine from 3-methyl-2-oxobutanoate: step 2/4. Functionally, catalyzes the isomerization between 2-isopropylmalate and 3-isopropylmalate, via the formation of 2-isopropylmaleate. The chain is 3-isopropylmalate dehydratase small subunit from Escherichia coli O127:H6 (strain E2348/69 / EPEC).